The sequence spans 567 residues: Interleukin-1 receptor-like 1 (567 aa).

A signal peptide spans methionine 1–glycine 26. Ig-like C2-type domains are found at residues serine 27–threonine 109 and proline 120–threonine 203. Residues serine 27–arginine 332 lie on the Extracellular side of the membrane. Cysteine 42 and cysteine 93 are joined by a disulfide. N-linked (GlcNAc...) asparagine glycosylation is found at asparagine 60, asparagine 101, asparagine 107, asparagine 146, asparagine 176, and asparagine 194. Cystine bridges form between cysteine 117-cysteine 157 and cysteine 139-cysteine 187. The interval arginine 204–phenylalanine 216 is flexible linker. The region spanning proline 217–arginine 324 is the Ig-like C2-type 3 domain. 3 N-linked (GlcNAc...) asparagine glycosylation sites follow: asparagine 225, asparagine 259, and asparagine 278. Cystine bridges form between cysteine 240–cysteine 308 and cysteine 243–cysteine 287. Lysine 326 participates in a covalent cross-link: Glycyl lysine isopeptide (Lys-Gly) (interchain with G-Cter in ubiquitin). Residues serine 333 to leucine 355 traverse the membrane as a helical segment. The Cytoplasmic portion of the chain corresponds to lysine 356–phenylalanine 567. The TIR domain maps to lysine 380–methionine 540. Serine 442 is modified (phosphoserine; by GSK3-beta). Glutamate 466 is a catalytic residue.

The protein belongs to the interleukin-1 receptor family. In terms of assembly, interacts with MYD88, IRAK1, IRAK4, and TRAF6. Bound to its ligand IL33, interacts with IL1RAP to form the minimal interleukin-33 signaling complex with a 1:1:1 stoichiometry. Interacts with KIT (bound to KITLG/SCF). A mast cell-specific KITLG/SCF-induced interleukin-33 signaling complex contains IL1RL1, IL1RAP, KIT and MYD88. Interacts with TMED1. In terms of processing, phosphorylated by GSK3B at Ser-442; leading to proteasomal degradation. Ubiquitinated at Lys-326 in a FBXL19-mediated manner; leading to proteasomal degradation. Ubiquitination by TRAF6 via 'Lys-27'-linked polyubiquitination and deubiquitination by USP38 serves as a critical regulatory mechanism for fine-tuning IL1RL1-mediated inflammatory response. Predominantly expressed in hematopoietic tissues, and in macrophage, erythroid, epithelial and fibroblast cell lines. Isoform A is expressed in brain astrocytes and microglia. Isoform B is expressed in brain endothelial cells.

It is found in the cell membrane. Its subcellular location is the secreted. The enzyme catalyses NAD(+) + H2O = ADP-D-ribose + nicotinamide + H(+). In terms of biological role, receptor for interleukin-33 (IL-33) which plays crucial roles in innate and adaptive immunity, contributing to tissue homeostasis and responses to environmental stresses together with coreceptor IL1RAP. Its stimulation recruits MYD88, IRAK1, IRAK4, and TRAF6, followed by phosphorylation of MAPK3/ERK1 and/or MAPK1/ERK2, MAPK14, and MAPK8. Possibly involved in helper T-cell function. Upon tissue injury, induces UCP2-dependent mitochondrial rewiring that attenuates the generation of reactive oxygen species and preserves the integrity of Krebs cycle required for persistent production of itaconate and subsequent GATA3-dependent differentiation of inflammation-resolving alternatively activated macrophages. Its function is as follows. Inhibits IL-33 signaling. This is Interleukin-1 receptor-like 1 (Il1rl1) from Mus musculus (Mouse).